We begin with the raw amino-acid sequence, 891 residues long: MMLIKNIVTLDQLESSDYLYKLISSVLPSLCLDYKIDPKLANGYVHALDTIYSPELISILTDGERSQQLDTLGINYILSRKNDLGIYFPINIRENGEIVSTWNKNTGGYTNPIPCTISFNDLPPFTKILIQIRTMGCEAHARYFGGYVEHPSSPNILSPKINPNISFANSYIHSLTYPYIEGRADYSTYRPLLINGIMEKKDLANLLNVRALLEPMSRAIFDAIFKIQFHCNANNIVLVQNPNIDTDLITMQTLKYLVMYFQHFSGFTLRDIYLGGVRIRVDNSMLASYVVSIYFSKEIKYIEDNKLFSLDYIDQFVFRPDNSNLNITVTAQQLGIRILNMTSNRPYIINLLNIVSKSLVRHRNVPKEISLFWDGMSYDEYKNMKFIDMMFLGTTCYLFALYNKNGITYCSMLNDVLRAEETPIRICVFPRILKGKTIPTLIREILENINNISVRDFPKYDTHDVKHIGLSDAGFMLFFQFLRLMENKEPHIAVKEILMAYTGIKIDDKGSPYYITPESYRTFIFMLFKAMGFNVRVNRTTISSHSYTSYYVSPRVSKRYLTNMLQKASCSQSEAEKLLSSAHDLVSFMLSVNNSSNRDSYRRINRSFFGGFKESASEEDATLVQFISPVNILDRINVKGILSANALNEIMDTDVFLPENANFKENLKQLLKEDTIDGKSIAHIIPLNTIDRLIVSAGGVSVGELLENLDERVPDENATNEVIELITNALKDRNMKDSNFIATNILNSITQISEKQMDGIKKITCHGTMMFKELAMHIYFTERYFKAKISDDVKISILEKYRDFIELSKSLYKDLIGIDQIKSVLSIVHRTGRNIDDNPITQEDIQKAYNIARPKILKLTNYYTEMTKSYFENIKRIMNPEDANAVVFDNE.

Belongs to the poxviridae protein P4a family. In terms of assembly, interacts with P39/A4.

It is found in the virion. In terms of biological role, core protein 4a is the most abundant virion protein. Major component of the virion core that undergoes proteolytic processing during the immature virion (IV) to mature virion (MV) transition. The polypeptide is Major core protein 4a precursor (Fowlpox virus (strain NVSL) (FPV)).